The sequence spans 432 residues: Short/branched chain specific acyl-CoA dehydrogenase, mitochondrial (432 aa).

The N-terminal 33 residues, 1–33 (MAVSAFQLWRAGGLLRRNFLTHSSSWKIPPRVL), are a transit peptide targeting the mitochondrion. The residue at position 70 (Lys-70) is an N6-acetyllysine; alternate. Lys-70 bears the N6-succinyllysine; alternate mark. FAD contacts are provided by residues 174 to 183 (FCLSEAGAGS) and 207 to 209 (WIS). Position 183 (Ser-183) interacts with substrate. Ser-183 is subject to Phosphoserine. Tyr-229 provides a ligand contact to substrate. N6-succinyllysine is present on Lys-278. A substrate-binding site is contributed by Tyr-283. At Lys-284 the chain carries N6-acetyllysine; alternate. The residue at position 284 (Lys-284) is an N6-succinyllysine; alternate. 291–294 (NEGR) contributes to the substrate binding site. FAD contacts are provided by residues Arg-319, Gln-330, and 387 to 391 (EWMGG). Residue Glu-414 is the Proton acceptor of the active site. 416–418 (TSN) is an FAD binding site. Position 426 is an N6-acetyllysine (Lys-426).

Belongs to the acyl-CoA dehydrogenase family. As to quaternary structure, homotetramer. Requires FAD as cofactor. In terms of tissue distribution, ubiquitously expressed.

It localises to the mitochondrion matrix. The catalysed reaction is 2-methylbutanoyl-CoA + oxidized [electron-transfer flavoprotein] + H(+) = (2E)-2-methylbut-2-enoyl-CoA + reduced [electron-transfer flavoprotein]. It carries out the reaction (2S)-2-methylbutanoyl-CoA + oxidized [electron-transfer flavoprotein] + H(+) = (2E)-2-methylbut-2-enoyl-CoA + reduced [electron-transfer flavoprotein]. The enzyme catalyses (2R)-2-methylbutanoyl-CoA + oxidized [electron-transfer flavoprotein] + H(+) = ethylacryloyl-CoA + reduced [electron-transfer flavoprotein]. It catalyses the reaction butanoyl-CoA + oxidized [electron-transfer flavoprotein] + H(+) = (2E)-butenoyl-CoA + reduced [electron-transfer flavoprotein]. The catalysed reaction is 2-methylpropanoyl-CoA + oxidized [electron-transfer flavoprotein] + H(+) = 2-methylpropenoyl-CoA + reduced [electron-transfer flavoprotein]. It carries out the reaction hexanoyl-CoA + oxidized [electron-transfer flavoprotein] + H(+) = (2E)-hexenoyl-CoA + reduced [electron-transfer flavoprotein]. The enzyme catalyses valproyl-CoA + oxidized [electron-transfer flavoprotein] + H(+) = (2E)-2-propylpent-2-enoyl-CoA + reduced [electron-transfer flavoprotein]. The protein operates within lipid metabolism; mitochondrial fatty acid beta-oxidation. Its pathway is amino-acid degradation; L-isoleucine degradation. Inhibited by N-ethylmaleimide, hydroxymercuribenzoate, methyl mercury iodide and heavy metals such as Hg2+, Cu2+, and Ag2+. Functionally, short and branched chain specific acyl-CoA dehydrogenase that catalyzes the removal of one hydrogen from C-2 and C-3 of the fatty acyl-CoA thioester, resulting in the formation of trans-2-enoyl-CoA. Among the different mitochondrial acyl-CoA dehydrogenases, acts specifically on short and branched chain acyl-CoA derivatives such as (S)-2-methylbutyryl-CoA as well as short straight chain acyl-CoAs such as butyryl-CoA. Plays an important role in the metabolism of L-isoleucine by catalyzing the dehydrogenation of 2-methylbutyryl-CoA, one of the steps of the L-isoleucine catabolic pathway. Can also act on valproyl-CoA, a metabolite of the valproic acid drug. The polypeptide is Short/branched chain specific acyl-CoA dehydrogenase, mitochondrial (Rattus norvegicus (Rat)).